A 495-amino-acid chain; its full sequence is Cytochrome P450 710A1 (495 aa).

The helical transmembrane segment at 5–25 (VSIFASLAPYLISAFLLFLLV) threads the bilayer. Cys-434 is a binding site for heme.

The protein belongs to the cytochrome P450 family. The cofactor is heme. In terms of tissue distribution, expressed in the vascular tissues of roots, shoots and leaves. Expressed in root tips and sepals. Very low expression in stems and siliques.

It localises to the membrane. It catalyses the reaction 5-dehydroepisterol + NADPH + O2 + H(+) = ergosta-5,7,22,24(28)-tetraen-3beta-ol + NADP(+) + 2 H2O. The protein operates within steroid biosynthesis; sterol biosynthesis. Functionally, required to form the C-22 double bond in the sterol side chain. Possesses in vitro C-22 desaturase activity toward beta-sitosterol and produces stigmasterol. No activity with campesterol. The protein is Cytochrome P450 710A1 of Arabidopsis thaliana (Mouse-ear cress).